The primary structure comprises 337 residues: MRVLGIETSCDETGIAIYDDEKGLLANQLYSQVKLHADYGGVVPELASRDHVRKTVPLIQEALKESGLTAKDIDAVAYTAGPGLVGALLVGATVGRSLAFAWDVPAIPVHHMEGHLLAPMLEDNPPEFPFVALLVSGGHTQLISVTGIGQYELLGESIDDAAGEAFDKTAKLLGLDYPGGPLLSKMAAQGTAGRFVFPRPMTDRPGLDFSFSGLKTFAANTIRDNGTDDQTRADIARAFEDAVVDTLMIKCKRALDQTGFKRLVMAGGVSANRTLRAKLAEMMKKRRGEVFYARPEFCTDNGAMIAYAGMVRFKAGATADLGVSVRPRWPLAELPAA.

2 residues coordinate Fe cation: His-111 and His-115. Substrate-binding positions include 134-138 (LVSGG), Asp-167, Gly-180, and Asn-272. Asp-300 serves as a coordination point for Fe cation.

Belongs to the KAE1 / TsaD family. The cofactor is Fe(2+).

It localises to the cytoplasm. The catalysed reaction is L-threonylcarbamoyladenylate + adenosine(37) in tRNA = N(6)-L-threonylcarbamoyladenosine(37) in tRNA + AMP + H(+). Functionally, required for the formation of a threonylcarbamoyl group on adenosine at position 37 (t(6)A37) in tRNAs that read codons beginning with adenine. Is involved in the transfer of the threonylcarbamoyl moiety of threonylcarbamoyl-AMP (TC-AMP) to the N6 group of A37, together with TsaE and TsaB. TsaD likely plays a direct catalytic role in this reaction. The sequence is that of tRNA N6-adenosine threonylcarbamoyltransferase from Escherichia coli O45:K1 (strain S88 / ExPEC).